The following is a 105-amino-acid chain: MIVQKELVAIYDYEVPVPEDPFSFRLEIHKCSELFTGSVYRLERFRLRPTFHQRDREDADPLINDALIYIRDECIDERKLRGESPETVIAIFNRELQNIFNQEIE.

This is an uncharacterized protein from Escherichia coli (strain K12).